The sequence spans 211 residues: Inactive ribonuclease-like protein 10 (211 aa).

Residues 1 to 24 (MKLTLVQIFFMMLLLLLGLGVGLG) form the signal peptide.

Belongs to the pancreatic ribonuclease family. In terms of processing, the N-terminus is blocked. Glycosylated.

The protein resides in the secreted. Functionally, secreted proximal epididymal protein required for post-testicular sperm maturation and male fertility. May be involved in sperm adhesion to the egg zona pellucida. Does not have ribonuclease activity. This Bos taurus (Bovine) protein is Inactive ribonuclease-like protein 10 (RNASE10).